The following is a 102-amino-acid chain: Large ribosomal subunit protein bL21 (102 aa).

It belongs to the bacterial ribosomal protein bL21 family. Part of the 50S ribosomal subunit. Contacts protein L20.

Its function is as follows. This protein binds to 23S rRNA in the presence of protein L20. The sequence is that of Large ribosomal subunit protein bL21 from Geotalea uraniireducens (strain Rf4) (Geobacter uraniireducens).